The sequence spans 157 residues: MRIIGIDPGLARVGYGIIEIENERKILLDCGVIETGKDKKEEDRLYEIFQDLNELINHWKPTVAAVEKFFFYRSSTTISVVQARGVIMMVLASKKIHVSEYSPAKIKLTIAGSGKASKKDILDAVMYNLDLDKPPKPDDSADALAIALTKLNEDGFN.

Active-site residues include Asp-7, Glu-67, and Asp-139. Mg(2+) is bound by residues Asp-7, Glu-67, and Asp-139.

This sequence belongs to the RuvC family. Homodimer which binds Holliday junction (HJ) DNA. The HJ becomes 2-fold symmetrical on binding to RuvC with unstacked arms; it has a different conformation from HJ DNA in complex with RuvA. In the full resolvosome a probable DNA-RuvA(4)-RuvB(12)-RuvC(2) complex forms which resolves the HJ. Requires Mg(2+) as cofactor.

It is found in the cytoplasm. The enzyme catalyses Endonucleolytic cleavage at a junction such as a reciprocal single-stranded crossover between two homologous DNA duplexes (Holliday junction).. Its function is as follows. The RuvA-RuvB-RuvC complex processes Holliday junction (HJ) DNA during genetic recombination and DNA repair. Endonuclease that resolves HJ intermediates. Cleaves cruciform DNA by making single-stranded nicks across the HJ at symmetrical positions within the homologous arms, yielding a 5'-phosphate and a 3'-hydroxyl group; requires a central core of homology in the junction. The consensus cleavage sequence is 5'-(A/T)TT(C/G)-3'. Cleavage occurs on the 3'-side of the TT dinucleotide at the point of strand exchange. HJ branch migration catalyzed by RuvA-RuvB allows RuvC to scan DNA until it finds its consensus sequence, where it cleaves and resolves the cruciform DNA. This chain is Crossover junction endodeoxyribonuclease RuvC, found in Prochlorococcus marinus (strain AS9601).